We begin with the raw amino-acid sequence, 229 residues long: PKHD-type hydroxylase OCAR_6723/OCA5_c13470 (229 aa).

Residues histidine 78–serine 180 form the Fe2OG dioxygenase domain. Residues histidine 98, aspartate 100, and histidine 161 each coordinate Fe cation. Arginine 171 lines the 2-oxoglutarate pocket.

It depends on Fe(2+) as a cofactor. L-ascorbate is required as a cofactor.

The polypeptide is PKHD-type hydroxylase OCAR_6723/OCA5_c13470 (Afipia carboxidovorans (strain ATCC 49405 / DSM 1227 / KCTC 32145 / OM5) (Oligotropha carboxidovorans)).